The chain runs to 157 residues: Heat shock 22 kDa protein, chloroplastic (157 aa).

The region spanning 40–155 (GKAGHTHAPM…KPEPKRIAVT (116 aa)) is the sHSP domain.

The protein belongs to the small heat shock protein (HSP20) family.

The protein resides in the plastid. It is found in the chloroplast. In Chlamydomonas reinhardtii (Chlamydomonas smithii), this protein is Heat shock 22 kDa protein, chloroplastic.